We begin with the raw amino-acid sequence, 188 residues long: Cell division protein SepF (188 aa).

Over residues 152-162 the composition is skewed to polar residues; the sequence is TSHDEASTPTV. Residues 152–188 form a disordered region; the sequence is TSHDEASTPTVVSRDAEAEQQQEAAAAPSPAWGATAL.

This sequence belongs to the SepF family. In terms of assembly, homodimer. Interacts with FtsZ.

It localises to the cytoplasm. Functionally, cell division protein that is part of the divisome complex and is recruited early to the Z-ring. Probably stimulates Z-ring formation, perhaps through the cross-linking of FtsZ protofilaments. Its function overlaps with FtsA. In Parasynechococcus marenigrum (strain WH8102), this protein is Cell division protein SepF.